Here is a 109-residue protein sequence, read N- to C-terminus: Mitochondrial import receptor subunit TOM22 homolog (109 aa).

The Cytoplasmic segment spans residues 1-60 (MALVRDDFDDIPDSEIHETIVERIEGLGEMFPDALRSAVHSTVDWSIWGVKGVFSLTKST). The chain crosses the membrane as a helical span at residues 61 to 77 (IWVVSTTSLIAFLPYII). The Mitochondrial intermembrane segment spans residues 78–109 (EKERSDLEKTQVAQQRQMLLGPSAAIQQAKTA).

This sequence belongs to the Tom22 family. In terms of assembly, forms part of the preprotein translocase complex of the outer mitochondrial membrane (TOM complex).

It localises to the mitochondrion outer membrane. Functionally, central receptor component of the translocase of the outer membrane of mitochondria (TOM complex) responsible for the recognition and translocation of cytosolically synthesized mitochondrial preproteins. Together with the peripheral receptor tomm-20 functions as the transit peptide receptor and facilitates the movement of preproteins into the translocation pore. The chain is Mitochondrial import receptor subunit TOM22 homolog from Caenorhabditis elegans.